Consider the following 848-residue polypeptide: Beta-galactosidase 13 (848 aa).

The first 27 residues, 1–27 (MKIHSSDHSWLLLAVLVILLSFSGALS), serve as a signal peptide directing secretion. Asn107 is a glycosylation site (N-linked (GlcNAc...) asparagine). Residue Glu200 is the Proton donor of the active site. Glu271 serves as the catalytic Nucleophile. N-linked (GlcNAc...) asparagine glycosylation is found at Asn272, Asn303, Asn376, Asn398, Asn782, Asn787, and Asn817. Residues 754–843 (DDVHLTANLK…KKLAVQVKCG (90 aa)) form the SUEL-type lectin domain.

This sequence belongs to the glycosyl hydrolase 35 family. As to expression, ubiquitous, with higher expression levels in roots, flowers and siliques.

It localises to the secreted. The protein localises to the extracellular space. It is found in the apoplast. The enzyme catalyses Hydrolysis of terminal non-reducing beta-D-galactose residues in beta-D-galactosides.. This is Beta-galactosidase 13 (BGAL13) from Arabidopsis thaliana (Mouse-ear cress).